The chain runs to 295 residues: Phosphatidylserine decarboxylase proenzyme (295 aa).

Residues D90, H147, and S254 each act as charge relay system; for autoendoproteolytic cleavage activity in the active site. The active-site Schiff-base intermediate with substrate; via pyruvic acid; for decarboxylase activity is S254. Position 254 is a pyruvic acid (Ser); by autocatalysis (S254).

The protein belongs to the phosphatidylserine decarboxylase family. PSD-B subfamily. Prokaryotic type I sub-subfamily. As to quaternary structure, heterodimer of a large membrane-associated beta subunit and a small pyruvoyl-containing alpha subunit. The cofactor is pyruvate. Post-translationally, is synthesized initially as an inactive proenzyme. Formation of the active enzyme involves a self-maturation process in which the active site pyruvoyl group is generated from an internal serine residue via an autocatalytic post-translational modification. Two non-identical subunits are generated from the proenzyme in this reaction, and the pyruvate is formed at the N-terminus of the alpha chain, which is derived from the carboxyl end of the proenzyme. The autoendoproteolytic cleavage occurs by a canonical serine protease mechanism, in which the side chain hydroxyl group of the serine supplies its oxygen atom to form the C-terminus of the beta chain, while the remainder of the serine residue undergoes an oxidative deamination to produce ammonia and the pyruvoyl prosthetic group on the alpha chain. During this reaction, the Ser that is part of the protease active site of the proenzyme becomes the pyruvoyl prosthetic group, which constitutes an essential element of the active site of the mature decarboxylase.

It localises to the cell membrane. It carries out the reaction a 1,2-diacyl-sn-glycero-3-phospho-L-serine + H(+) = a 1,2-diacyl-sn-glycero-3-phosphoethanolamine + CO2. It functions in the pathway phospholipid metabolism; phosphatidylethanolamine biosynthesis; phosphatidylethanolamine from CDP-diacylglycerol: step 2/2. Its function is as follows. Catalyzes the formation of phosphatidylethanolamine (PtdEtn) from phosphatidylserine (PtdSer). The polypeptide is Phosphatidylserine decarboxylase proenzyme (Sodalis glossinidius (strain morsitans)).